The following is a 373-amino-acid chain: Leucine aminopeptidase 1 (373 aa).

A signal peptide spans 1–18 (MKLLSVLALSATATSVLG). Asparagine 136 carries an N-linked (GlcNAc...) asparagine glycan. Histidine 176 and aspartate 195 together coordinate Zn(2+). Asparagine 196 carries N-linked (GlcNAc...) asparagine glycosylation. Zn(2+)-binding residues include glutamate 234 and aspartate 261. Asparagine 284 carries N-linked (GlcNAc...) asparagine glycosylation. Cysteines 310 and 314 form a disulfide. Histidine 343 contributes to the Zn(2+) binding site.

This sequence belongs to the peptidase M28 family. M28E subfamily. As to quaternary structure, monomer. Zn(2+) serves as cofactor.

The protein resides in the secreted. Functionally, extracellular aminopeptidase which contributes to pathogenicity. The polypeptide is Leucine aminopeptidase 1 (LAP1) (Trichophyton equinum (Horse ringworm fungus)).